The chain runs to 329 residues: 3-dehydroquinate synthase (329 aa).

This sequence belongs to the archaeal-type DHQ synthase family.

It catalyses the reaction 2-amino-2,3,7-trideoxy-D-lyxo-hept-6-ulosonate + NAD(+) + H2O = 3-dehydroquinate + NH4(+) + NADH + H(+). Catalyzes the oxidative deamination and cyclization of 2-amino-3,7-dideoxy-D-threo-hept-6-ulosonic acid (ADH) to yield 3-dehydroquinate (DHQ), which is fed into the canonical shikimic pathway of aromatic amino acid biosynthesis. This Methanoregula boonei (strain DSM 21154 / JCM 14090 / 6A8) protein is 3-dehydroquinate synthase.